A 686-amino-acid polypeptide reads, in one-letter code: MDLLRLSRLFSGPHPIGLSVLQRLDLLRSTQWTGGREGPAWLRAASCSSSSHQKRMSSLCSDSSTPVAPQEEEEEESFGTLSEKFSSRRIFHKSTAQLYNLKLKEQGVEEEELEPRLRQGGRNTPYWYFLQCKRLLKEGKLAEALDLFERQMLKEERLQPLECNYTVLIGGCGRVGYLKKAFRLFNDMKKRDLEPSDATYTALFNVCAESPWKDSALQSALKLRQQLQAQNFQLNLKTYHALLKVAAKCADLRVCLEVFKEIIQKGHAVTEETFCFLLMGCIQDKKTGFRQAMQVWRQMLSLGIKPSRHGYNLLLGAARDCGLGDPEVASRLLLTSQEETILLQPPTGRRLAGGKVQAKTRHGVSVKHVEALERQLFLEPSHKLEGPPAFPEARETSRTQPEVETKAEPGHMGALAPLALKPPDLELQVNLLSLGALSPAVVSFGTVATPADRLALMGGLEGFLGKMAEHRLQPDIKTLTLLAEVVEPGSPAESSLLSILDRHRVEADITFFNTLIRKKSKLGDLEGAKALLPILAKKGIVPNLRTFCNLAIGCHRPRDGMQLLADMKKSQVTPNTHIYSTLINAALKKLDYTYLISILKDMRRNSVPVNEVVIRQLEFAAQYPPTFDRYKEKNTYLEKIDGFRAYYKQWLKVMPAEEPPHPWQEFRDKPVRNQVITENAGGLRDG.

The span at 55-67 shows a compositional bias: polar residues; sequence RMSSLCSDSSTPV. The segment at 55 to 79 is disordered; sequence RMSSLCSDSSTPVAPQEEEEEESFG. 5 PPR repeats span residues 124–160, 161–195, 196–234, 235–269, and 270–306; these read TPYW…RLQP, LECN…DLEP, SDAT…NFQL, NLKT…GHAV, and TEET…GIKP. The disordered stretch occupies residues 383 to 407; the sequence is KLEGPPAFPEARETSRTQPEVETKA. A compositionally biased stretch (basic and acidic residues) spans 392–407; the sequence is EARETSRTQPEVETKA. PPR repeat units follow at residues 508–542 and 575–609; these read DITF…GIVP and NTHI…SVPV.

This sequence belongs to the PTCD1 family. As to quaternary structure, associates with mitochondrial leucine tRNAs. Interacts with ELAC2.

Its subcellular location is the mitochondrion matrix. Mitochondrial protein implicated in negative regulation of leucine tRNA levels, as well as negative regulation of mitochondria-encoded proteins and COX activity. Also affects the 3'-processing of mitochondrial tRNAs. In Rattus norvegicus (Rat), this protein is Pentatricopeptide repeat-containing protein 1, mitochondrial (Ptcd1).